Here is a 400-residue protein sequence, read N- to C-terminus: Na(+)/H(+) antiporter NhaA (400 aa).

A run of 12 helical transmembrane segments spans residues L18–I38, V68–I88, L105–S125, G133–L153, V163–F183, S186–F206, V211–S231, G232–S252, G267–V287, I305–V325, W338–I358, and A372–L392.

Belongs to the NhaA Na(+)/H(+) (TC 2.A.33) antiporter family.

The protein resides in the cell inner membrane. It catalyses the reaction Na(+)(in) + 2 H(+)(out) = Na(+)(out) + 2 H(+)(in). Functionally, na(+)/H(+) antiporter that extrudes sodium in exchange for external protons. The chain is Na(+)/H(+) antiporter NhaA from Pseudomonas entomophila (strain L48).